Consider the following 637-residue polypeptide: SCF-associated factor 1 (637 aa).

The F-box domain maps to 14-63; that stretch reads GLSPDIVQATLPFLSSDDIKNLSQTNKYYNTLLDFDHSKILWHELFHKAF. Ser-16 is modified (phosphoserine). The RCC1 1 repeat unit spans residues 109–202; that stretch reads AKFYSWGYLK…GFSFQILTES (94 aa). The tract at residues 242–315 is disordered; sequence YPRITSRSNG…RTTMPSMGPH (74 aa). A compositionally biased stretch (polar residues) spans 244–260; that stretch reads RITSRSNGSTVNTTGTF. At Ser-266 the chain carries Phosphoserine. Residues 289–305 are compositionally biased toward low complexity; that stretch reads SGGAPAASPGGSHSGVP. One copy of the RCC1 2 repeat lies at 565-635; it reads GHLYSWGIES…GWQTGALIIK (71 aa).

In terms of assembly, interacts with AAH1, SKP1 and CDC53. Component of the SCF(SAF1) complex containing CDC53, SKP1, HRT1 and SAF1.

It functions in the pathway protein modification; protein ubiquitination. Substrate recognition component of a SCF (SKP1-CUL1-F-box protein) E3 ubiquitin-protein ligase complex which mediates the ubiquitination and subsequent proteasomal degradation of target proteins. Targets AAH1 adenine deaminase for proteasome-dependent degradation upon entry into quiescence. Targets also URA7. The chain is SCF-associated factor 1 (SAF1) from Saccharomyces cerevisiae (strain ATCC 204508 / S288c) (Baker's yeast).